The primary structure comprises 262 residues: Lysine 5,6-aminomutase beta subunit (262 aa).

One can recognise a B12-binding domain in the interval 120-262 (KIVVVGASTG…VKTLNDRMNS (143 aa)). Adenosylcob(III)alamin is bound by residues 130–136 (TDAHTVG) and His-133. Lys-144 bears the N6-(pyridoxal phosphate)lysine mark. Adenosylcob(III)alamin is bound by residues 185 to 192 (LVSQTVTQ), 219 to 223 (LCGGP), and 239 to 244 (FGPGRF).

Belongs to the KamE family. Heterotetramer of 2 alpha and 2 beta subunits. It depends on adenosylcob(III)alamin as a cofactor. Requires pyridoxal 5'-phosphate as cofactor.

It catalyses the reaction (3S)-3,6-diaminohexanoate = (3S,5S)-3,5-diaminohexanoate. It carries out the reaction D-lysine = (2R,5S)-2,5-diaminohexanoate. It functions in the pathway amino-acid metabolism; lysine degradation. Its activity is regulated as follows. Rapidly inactivated in the presence of D-lysine and to a lesser extent in the absence of adenosylcobalamin (Adocbl). Activity is stable in the presence of Adocbl when D-lysine is absent. Adocbl imparts thermal stability at 37 degrees Celsius. In terms of biological role, catalyzes the migration of the L-beta-lysine and D-lysine epsilon amino group to the delta carbon to produce 3,5-diaminohexanoate and 2,5-diaminohexanoate, respectively. This is Lysine 5,6-aminomutase beta subunit (kamE) from Acetoanaerobium sticklandii (strain ATCC 12662 / DSM 519 / JCM 1433 / CCUG 9281 / NCIMB 10654 / HF) (Clostridium sticklandii).